A 480-amino-acid chain; its full sequence is Glutamate--tRNA ligase (480 aa).

The 'HIGH' region motif lies at 21–31; the sequence is PSPTGYLHVGG. C110, C112, C137, and H139 together coordinate Zn(2+). The 'KMSKS' region motif lies at 248 to 252; it reads KLSKR. K251 is an ATP binding site.

It belongs to the class-I aminoacyl-tRNA synthetase family. Glutamate--tRNA ligase type 1 subfamily. Monomer. It depends on Zn(2+) as a cofactor.

The protein localises to the cytoplasm. It carries out the reaction tRNA(Glu) + L-glutamate + ATP = L-glutamyl-tRNA(Glu) + AMP + diphosphate. Its function is as follows. Catalyzes the attachment of glutamate to tRNA(Glu) in a two-step reaction: glutamate is first activated by ATP to form Glu-AMP and then transferred to the acceptor end of tRNA(Glu). In Haemophilus influenzae (strain 86-028NP), this protein is Glutamate--tRNA ligase.